Consider the following 357-residue polypeptide: MSHTILIMAGGTGGHVFPGLAVAEYLKAAGWRIVWLGTEGGMETTLARQQGHALETIRFSGLRGKNVRTWLLLPARLLLAFWQSARVIRKVRPDVVLGMGGYPAFPGGMMASLLARPLLIHEQNSIPGLANRILSRLADRVLLGFPDAIKSEKKAVFCGNPVRDEITRLAPPAQRYAGRSGSIKLLVVGGSLGAQALNTIVPRALKRIPEGMRPQVTHQAGARHLEALKQNYSEAGVEGELVTFIDNMASRYGESDLVICRAGALTVSELAAAGVASILVPFPYAVDDHQSTNAKFLSGKGAAILLPQSQLTPEGLAELLVGMSRGQLMEMACRARELAQPDATRCVAETCMQMVAV.

Residues 12 to 14 (TGG), Asn124, Arg163, Ser191, Ile245, 264 to 269 (ALTVSE), and Gln290 contribute to the UDP-N-acetyl-alpha-D-glucosamine site.

The protein belongs to the glycosyltransferase 28 family. MurG subfamily.

The protein resides in the cell inner membrane. It catalyses the reaction di-trans,octa-cis-undecaprenyl diphospho-N-acetyl-alpha-D-muramoyl-L-alanyl-D-glutamyl-meso-2,6-diaminopimeloyl-D-alanyl-D-alanine + UDP-N-acetyl-alpha-D-glucosamine = di-trans,octa-cis-undecaprenyl diphospho-[N-acetyl-alpha-D-glucosaminyl-(1-&gt;4)]-N-acetyl-alpha-D-muramoyl-L-alanyl-D-glutamyl-meso-2,6-diaminopimeloyl-D-alanyl-D-alanine + UDP + H(+). The protein operates within cell wall biogenesis; peptidoglycan biosynthesis. Functionally, cell wall formation. Catalyzes the transfer of a GlcNAc subunit on undecaprenyl-pyrophosphoryl-MurNAc-pentapeptide (lipid intermediate I) to form undecaprenyl-pyrophosphoryl-MurNAc-(pentapeptide)GlcNAc (lipid intermediate II). This Nitrosospira multiformis (strain ATCC 25196 / NCIMB 11849 / C 71) protein is UDP-N-acetylglucosamine--N-acetylmuramyl-(pentapeptide) pyrophosphoryl-undecaprenol N-acetylglucosamine transferase.